A 366-amino-acid chain; its full sequence is Zinc-regulated GTPase metalloprotein activator 1 (366 aa).

Positions 5-12 match the psi-PxLVp motif motif; sequence DECPELVP. 31–38 is a GTP binding site; it reads GYLGAGKT. Positions 89, 91, and 92 each coordinate Zn(2+). The CXCC motif signature appears at 89–92; it reads CLCC. GTP is bound by residues 92–96 and 185–188; these read CSVKD and NKTD. The region spanning 258–357 is the CobW C-terminal domain; the sequence is TITFEVPGSV…GEILKKEFIS (100 aa).

This sequence belongs to the SIMIBI class G3E GTPase family. ZNG1 subfamily.

It localises to the nucleus. It catalyses the reaction GTP + H2O = GDP + phosphate + H(+). In terms of biological role, zinc chaperone that directly transfers zinc cofactor to target metalloproteins, thereby activating them. Catalyzes zinc insertion into the active site of methionine aminopeptidase METAP1, which function to cleave the initiator methionine from polypeptides during or after protein translation. Mechanistically, the N-terminal psi-PxLVp motif binds to the C6H2-type zinc finger of inactive form of METAP1. After formation of the docked complex, zinc is transferred from the CXCC motif in the GTPase domain of ZNG1 to the zinc binding site in the peptidase domain of METAP1 in a process requiring GTP hydrolysis. GTP/GDP exchange is required for release of active METAP1. The protein is Zinc-regulated GTPase metalloprotein activator 1 of Danio rerio (Zebrafish).